Here is a 1368-residue protein sequence, read N- to C-terminus: DNA-directed RNA polymerase subunit beta (1368 aa).

Belongs to the RNA polymerase beta chain family. The RNAP catalytic core consists of 2 alpha, 1 beta, 1 beta' and 1 omega subunit. When a sigma factor is associated with the core the holoenzyme is formed, which can initiate transcription.

The catalysed reaction is RNA(n) + a ribonucleoside 5'-triphosphate = RNA(n+1) + diphosphate. DNA-dependent RNA polymerase catalyzes the transcription of DNA into RNA using the four ribonucleoside triphosphates as substrates. In Burkholderia pseudomallei (strain K96243), this protein is DNA-directed RNA polymerase subunit beta.